Reading from the N-terminus, the 241-residue chain is ATP synthase subunit a (241 aa).

The next 5 membrane-spanning stretches (helical) occupy residues 30–50, 91–111, 128–148, 193–213, and 214–234; these read GQVF…VVIG, FIGT…LVPW, INTT…AGLS, LVVA…VMFL, and GLFT…YYIG.

This sequence belongs to the ATPase A chain family. F-type ATPases have 2 components, CF(1) - the catalytic core - and CF(0) - the membrane proton channel. CF(1) has five subunits: alpha(3), beta(3), gamma(1), delta(1), epsilon(1). CF(0) has four main subunits: a, b, b' and c.

The protein localises to the cellular thylakoid membrane. In terms of biological role, key component of the proton channel; it plays a direct role in the translocation of protons across the membrane. The chain is ATP synthase subunit a from Prochlorococcus marinus (strain NATL1A).